Consider the following 208-residue polypeptide: Large ribosomal subunit protein uL4 (208 aa).

Residues 50–83 form a disordered region; that stretch reads VKTRAEVSGGGRKPWKQKGTGRARQGSIRAPQWK.

This sequence belongs to the universal ribosomal protein uL4 family. In terms of assembly, part of the 50S ribosomal subunit.

One of the primary rRNA binding proteins, this protein initially binds near the 5'-end of the 23S rRNA. It is important during the early stages of 50S assembly. It makes multiple contacts with different domains of the 23S rRNA in the assembled 50S subunit and ribosome. In terms of biological role, forms part of the polypeptide exit tunnel. The sequence is that of Large ribosomal subunit protein uL4 from Mycoplasma capricolum subsp. capricolum (strain California kid / ATCC 27343 / NCTC 10154).